Reading from the N-terminus, the 170-residue chain is Cathelicidin antimicrobial peptide (170 aa).

A signal peptide spans 1 to 30 (MKTQRDSPSLGRWSLVLLLLGLVMPLAIVA). A propeptide spans 31-131 (QVLSYQEAVL…DISCDKDNRR (101 aa)) (cathelin-like domain (CLD)). Disulfide bonds link Cys86/Cys97 and Cys108/Cys125. The segment at 150-162 (FKRIVQRIKDFLQ) is active core.

This sequence belongs to the cathelicidin family. Monomer, homodimer or homotrimer (in vitro). Oligomerizes as tetra- or hexamer in solution (in vitro). Proteolytically cleaved by proteinase PRTN3 into antibacterial peptide LL-37. Proteolytically cleaved by cathepsin CTSG and neutrophil elastase ELANE. In terms of processing, resistant to proteolytic degradation in solution, and when bound to both zwitterionic (mimicking mammalian membranes) and negatively charged membranes (mimicking bacterial membranes). Post-translationally, after secretion onto the skin surface, the CAMP gene product is processed by a serine protease-dependent mechanism into multiple novel antimicrobial peptides distinct from and shorter than cathelicidin LL-37. These peptides show enhanced antimicrobial action, acquiring the ability to kill skin pathogens such as S.aureus, E.coli and C.albicans. These peptides have lost the ability to stimulate CXCL8/IL8 release from keratinocytes. The peptides act synergistically, killing bacteria at lower concentrations when present together, and maintain activity at increased salt condition.

It is found in the secreted. It localises to the vesicle. Functionally, antimicrobial protein that is an integral component of the innate immune system. Binds to bacterial lipopolysaccharides (LPS). Acts via neutrophil N-formyl peptide receptors to enhance the release of CXCL2. Postsecretory processing generates multiple cathelicidin antimicrobial peptides with various lengths which act as a topical antimicrobial defense in sweat on skin. The unprocessed precursor form, cathelicidin antimicrobial peptide, inhibits the growth of Gram-negative E.coli and E.aerogenes with efficiencies comparable to that of the mature peptide LL-37 (in vitro). In terms of biological role, antimicrobial peptide that is an integral component of the innate immune system. Binds to bacterial lipopolysaccharides (LPS). Causes membrane permeabilization by forming transmembrane pores (in vitro). Causes lysis of E.coli. Exhibits antimicrobial activity against Gram-negative bacteria such as P.aeruginosa, S.typhimurium, E.aerogenes, E.coli and P.syringae, Gram-positive bacteria such as L.monocytogenes, S.epidermidis, S.pyogenes and S.aureus, as well as vancomycin-resistant enterococci (in vitro). Exhibits antimicrobial activity against methicillin-resistant S.aureus, P.mirabilis, and C.albicans in low-salt media, but not in media containing 100 mM NaCl (in vitro). Forms chiral supramolecular assemblies with quinolone signal (PQS) molecules of P.aeruginosa, which may lead to interference of bacterial quorum signaling and perturbance of bacterial biofilm formation. May form supramolecular fiber-like assemblies on bacterial membranes. Induces cytokine and chemokine producation as well as TNF/TNFA and CSF2/GMCSF production in normal human keratinocytes. Exhibits hemolytic activity against red blood cells. Exhibits antimicrobial activity against E.coli and B.megaterium (in vitro). The chain is Cathelicidin antimicrobial peptide from Nomascus gabriellae (Red-cheeked gibbon).